Reading from the N-terminus, the 393-residue chain is Putative acid--amine ligase HI_0929 (393 aa).

Position 103-105 (103-105 (RFD)) interacts with ATP. Mg(2+) is bound by residues D105, E117, and N119. ATP contacts are provided by residues K267, K303, G310, Q343, and 378–380 (AVT).

Belongs to the glutathionylspermidine synthase preATP-grasp family.

Functionally, may be a ligase forming an amide bond. Shows ATPase activity. This Haemophilus influenzae (strain ATCC 51907 / DSM 11121 / KW20 / Rd) protein is Putative acid--amine ligase HI_0929.